A 594-amino-acid chain; its full sequence is Golgi-associated RAB2 interactor protein 4 (594 aa).

The interval 387–524 is disordered; sequence MDAAAGPPVS…TSSGSSKGLG (138 aa). Residues 396 to 406 show a composition bias toward polar residues; that stretch reads STRQSKSSLSG. Basic and acidic residues-rich tracts occupy residues 408-433, 442-455, and 468-477; these read HGRE…DRAL, TGES…DKIA, and ANRDDKKEKG. The segment covering 511-520 has biased composition (polar residues); that stretch reads SLWTTSSGSS.

This sequence belongs to the GARIN family. Interacts (via N-terminus) with RAB2B (in GTP-bound form).

Its subcellular location is the golgi apparatus. Functionally, RAB2B effector protein required for the compacted Golgi morphology, probably through interaction with small GTPase RAB2B. This Homo sapiens (Human) protein is Golgi-associated RAB2 interactor protein 4.